The primary structure comprises 290 residues: Phosphate import ATP-binding protein PstB (290 aa).

In terms of domain architecture, ABC transporter spans 25–285 (LEARNLDFYY…PKTRRARDYL (261 aa)). Residue 57 to 64 (GPSGCGKS) participates in ATP binding.

It belongs to the ABC transporter superfamily. Phosphate importer (TC 3.A.1.7) family. The complex is composed of two ATP-binding proteins (PstB), two transmembrane proteins (PstC and PstA) and a solute-binding protein (PstS).

It is found in the cell inner membrane. The enzyme catalyses phosphate(out) + ATP + H2O = ADP + 2 phosphate(in) + H(+). Its function is as follows. Part of the ABC transporter complex PstSACB involved in phosphate import. Responsible for energy coupling to the transport system. The polypeptide is Phosphate import ATP-binding protein PstB (Zymomonas mobilis subsp. mobilis (strain ATCC 31821 / ZM4 / CP4)).